The chain runs to 544 residues: Serine/threonine-protein kinase PAK 1 (544 aa).

Residues 1–77 (MSNNGLDIQD…KEKERPEISL (77 aa)) form a disordered region. Ser-2 is subject to N-acetylserine. A Phosphoserine; by PKB and autocatalysis modification is found at Ser-21. A compositionally biased stretch (basic and acidic residues) spans 68–77 (KEKERPEISL). The autoregulatory region stretch occupies residues 70-140 (KERPEISLPS…YNSKKTSNSQ (71 aa)). Residues 75-88 (ISLPSDFEHTIHVG) enclose the CRIB domain. The tract at residues 75–105 (ISLPSDFEHTIHVGFDAVTGEFTGMPEQWAR) is GTPase-binding. Thr-84 bears the Phosphothreonine; by OXSR1 mark. Ser-115 is modified (phosphoserine). Tyr-131 and Tyr-142 each carry phosphotyrosine. 2 positions are modified to phosphoserine; by autocatalysis: Ser-144 and Ser-149. A Phosphotyrosine; by JAK2 modification is found at Tyr-153. The segment at 161–193 (VKAVSETPAVPPVSEDEDDDDDGTPPPVIAPRP) is disordered. Ser-174 is subject to Phosphoserine. A compositionally biased stretch (acidic residues) spans 174–183 (SEDEDDDDDG). The residue at position 184 (Thr-184) is a Phosphothreonine. Ser-198 is modified (phosphoserine; by autocatalysis). The residue at position 200 (Tyr-200) is a Phosphotyrosine; by JAK2. Ser-203 is modified (phosphoserine; by autocatalysis). Phosphothreonine is present on residues Thr-211 and Thr-218. The interval 212–250 (PTRDVATSPISPTENNTTPPDALTRNTEKQKKKPKMSDE) is disordered. Phosphoserine occurs at positions 219 and 222. The segment covering 219–230 (SPISPTENNTTP) has biased composition (polar residues). Phosphothreonine occurs at positions 224, 228, and 229. Positions 269–520 (YTRFEKIGQG…AKELLQHQFL (252 aa)) constitute a Protein kinase domain. 275–283 (IGQGASGTV) contributes to the ATP binding site. Tyr-284 carries the phosphotyrosine; by JAK2 modification. Lys-298 serves as a coordination point for ATP. The active-site Proton acceptor is Asp-388. The residue at position 422 (Thr-422) is a Phosphothreonine; by autocatalysis, BRSK2 and PDPK1.

It belongs to the protein kinase superfamily. STE Ser/Thr protein kinase family. STE20 subfamily. Homodimer in its autoinhibited state. Active as monomer. Interacts with GIT1. Component of cytoplasmic complexes, which also contains PXN, ARHGEF7 and GIT1. Interacts with NISCH. Interacts with DVL1; mediates the formation of a DVL1, MUSK and PAK1 ternary complex involved in AChR clustering. Binds to the caspase-cleaved p110 isoform of CDC2L1 and CDC2L2, p110C, but not the full-length proteins. Interacts with ARHGEF7. Interacts tightly with GTP-bound but not GDP-bound CDC42/P21 and RAC1. Probably found in a ternary complex composed of DSCAM, PAK1 and RAC1. Interacts with DSCAM (via cytoplasmic domain); the interaction is direct and enhanced in presence of RAC1. Interacts with SCRIB. Interacts with PDPK1. Interacts (via kinase domain) with RAF1. Interacts with NCK1 and NCK2. Interacts with TBCB. Interacts with BRSK2. Interacts with SNAI1. Interacts with CIB1 (via N-terminal region); the interaction is direct, promotes PAK1 activity and occurs in a calcium-dependent manner. Interacts with INPP5K. Interacts with gamma-tubulin. Interacts with RHOU; the interaction promotes PAK1 activation. The cofactor is Mg(2+). In terms of processing, autophosphorylated in trans, meaning that in a dimer, one kinase molecule phosphorylates the other one. Activated by autophosphorylation at Thr-422 in response to a conformation change, triggered by interaction with GTP-bound CDC42 or RAC1. Activated by phosphorylation at Thr-422 by BRSK2 and by PDPK1. Phosphorylated by JAK2 in response to PRL; this increases PAK1 kinase activity. Phosphorylated at Ser-21 by PKB/AKT; this reduces interaction with NCK1 and association with focal adhesion sites. Upon DNA damage, phosphorylated at Thr-211 and translocates to the nucleoplasm. Phosphorylated at tyrosine residues, which can be enhanced by NTN1.

The protein localises to the cytoplasm. It is found in the cell junction. It localises to the focal adhesion. Its subcellular location is the cell projection. The protein resides in the lamellipodium. The protein localises to the cell membrane. It is found in the ruffle membrane. It localises to the invadopodium. Its subcellular location is the nucleus. The protein resides in the nucleoplasm. The protein localises to the chromosome. It is found in the cytoskeleton. It localises to the microtubule organizing center. Its subcellular location is the centrosome. It carries out the reaction L-seryl-[protein] + ATP = O-phospho-L-seryl-[protein] + ADP + H(+). The catalysed reaction is L-threonyl-[protein] + ATP = O-phospho-L-threonyl-[protein] + ADP + H(+). With respect to regulation, phosphorylation of Thr-84 by OXSR1 inhibits activation. Activated by binding small G proteins. Binding of GTP-bound CDC42 or RAC1 to the autoregulatory region releases monomers from the autoinhibited dimer, and enables activation by phosphorylation of Thr-422. In terms of biological role, protein kinase involved in intracellular signaling pathways downstream of integrins and receptor-type kinases that plays an important role in cytoskeleton dynamics, in cell adhesion, migration, proliferation, apoptosis, mitosis, and in vesicle-mediated transport processes. Can directly phosphorylate BAD and protects cells against apoptosis. Activated by interaction with CDC42 and RAC1. Functions as a GTPase effector that links the Rho-related GTPases CDC42 and RAC1 to the JNK MAP kinase pathway. Phosphorylates and activates MAP2K1, and thereby mediates activation of downstream MAP kinases. Involved in the reorganization of the actin cytoskeleton, actin stress fibers and of focal adhesion complexes. Phosphorylates the tubulin chaperone TBCB and thereby plays a role in the regulation of microtubule biogenesis and organization of the tubulin cytoskeleton. Plays a role in the regulation of insulin secretion in response to elevated glucose levels. Part of a ternary complex that contains PAK1, DVL1 and MUSK that is important for MUSK-dependent regulation of AChR clustering during the formation of the neuromuscular junction (NMJ). Activity is inhibited in cells undergoing apoptosis, potentially due to binding of CDC2L1 and CDC2L2. Phosphorylates MYL9/MLC2. Phosphorylates RAF1 at 'Ser-338' and 'Ser-339' resulting in: activation of RAF1, stimulation of RAF1 translocation to mitochondria, phosphorylation of BAD by RAF1, and RAF1 binding to BCL2. Phosphorylates SNAI1 at 'Ser-246' promoting its transcriptional repressor activity by increasing its accumulation in the nucleus. In podocytes, promotes NR3C2 nuclear localization. Required for atypical chemokine receptor ACKR2-induced phosphorylation of LIMK1 and cofilin (CFL1) and for the up-regulation of ACKR2 from endosomal compartment to cell membrane, increasing its efficiency in chemokine uptake and degradation. In synapses, seems to mediate the regulation of F-actin cluster formation performed by SHANK3, maybe through CFL1 phosphorylation and inactivation. Plays a role in RUFY3-mediated facilitating gastric cancer cells migration and invasion. In response to DNA damage, phosphorylates MORC2 which activates its ATPase activity and facilitates chromatin remodeling. In neurons, plays a crucial role in regulating GABA(A) receptor synaptic stability and hence GABAergic inhibitory synaptic transmission through its role in F-actin stabilization. In hippocampal neurons, necessary for the formation of dendritic spines and excitatory synapses; this function is dependent on kinase activity and may be exerted by the regulation of actomyosin contractility through the phosphorylation of myosin II regulatory light chain (MLC). Along with GIT1, positively regulates microtubule nucleation during interphase. Phosphorylates FXR1, promoting its localization to stress granules and activity. Phosphorylates ILK on 'Thr-173' and 'Ser-246', promoting nuclear export of ILK. In Bos taurus (Bovine), this protein is Serine/threonine-protein kinase PAK 1.